Consider the following 374-residue polypeptide: Heme A synthase (374 aa).

The disordered stretch occupies residues 1–22 (MSDHIRAASSPSRHGSEHGWQH). 5 helical membrane passes run 32–52 (ILVA…VMLG), 118–138 (RLWG…LAVT), 149–169 (LILI…MVAS), 184–204 (VVHL…ALSV), and 226–246 (LGLV…HAGL). His281 is a binding site for heme. The next 3 helical transmembrane spans lie at 283–300 (LLAT…LIGF), 309–329 (AVLP…ATLL), and 332–352 (VAVP…TAAI). His340 is a heme binding site.

It belongs to the COX15/CtaA family. Type 2 subfamily. In terms of assembly, interacts with CtaB. The cofactor is heme b.

The protein localises to the cell membrane. It carries out the reaction Fe(II)-heme o + 2 A + H2O = Fe(II)-heme a + 2 AH2. It participates in porphyrin-containing compound metabolism; heme A biosynthesis; heme A from heme O: step 1/1. Its function is as follows. Catalyzes the conversion of heme O to heme A by two successive hydroxylations of the methyl group at C8. The first hydroxylation forms heme I, the second hydroxylation results in an unstable dihydroxymethyl group, which spontaneously dehydrates, resulting in the formyl group of heme A. This Granulibacter bethesdensis (strain ATCC BAA-1260 / CGDNIH1) protein is Heme A synthase.